The sequence spans 492 residues: Protein nucleotidyltransferase YdiU (492 aa).

The ATP site is built by G91, G93, R94, K114, D126, G127, R180, and R187. D256 (proton acceptor) is an active-site residue. Mg(2+) contacts are provided by N257 and D266. D266 contributes to the ATP binding site.

The protein belongs to the SELO family. Mg(2+) serves as cofactor. Mn(2+) is required as a cofactor.

It catalyses the reaction L-seryl-[protein] + ATP = 3-O-(5'-adenylyl)-L-seryl-[protein] + diphosphate. It carries out the reaction L-threonyl-[protein] + ATP = 3-O-(5'-adenylyl)-L-threonyl-[protein] + diphosphate. The catalysed reaction is L-tyrosyl-[protein] + ATP = O-(5'-adenylyl)-L-tyrosyl-[protein] + diphosphate. The enzyme catalyses L-histidyl-[protein] + UTP = N(tele)-(5'-uridylyl)-L-histidyl-[protein] + diphosphate. It catalyses the reaction L-seryl-[protein] + UTP = O-(5'-uridylyl)-L-seryl-[protein] + diphosphate. It carries out the reaction L-tyrosyl-[protein] + UTP = O-(5'-uridylyl)-L-tyrosyl-[protein] + diphosphate. Nucleotidyltransferase involved in the post-translational modification of proteins. It can catalyze the addition of adenosine monophosphate (AMP) or uridine monophosphate (UMP) to a protein, resulting in modifications known as AMPylation and UMPylation. This Synechococcus elongatus (strain ATCC 33912 / PCC 7942 / FACHB-805) (Anacystis nidulans R2) protein is Protein nucleotidyltransferase YdiU.